Reading from the N-terminus, the 379-residue chain is MSDRAFDTPVWHHGKALRKGYTTGSCATAAAKVAALMALRQQPIHQIAIVTPSGVTLNLSVESPHIEGEQAIAAIRKDGGDDVDATHGMLIFARVTLNDSGAISLSGGEGIGTVTRKGIGLPIGSAAINRTPRHTIESAVREAIGPTRGAAVEIFAPEGVARAQKTYNARLGILGGISIIGTTGIVTPMSEESWKRSLALTLEMKRAAGMTRVVLVPGNHGERFVREQMGIAADAVVTMSNFVGYMVEEAVRLGFRQIVLVGHPGKLIKVAAGIFHTHSHMADARMETLVAHLALLGAPLALLTRVRDCDTTEAAMEHIDAYGFQSLYDHLAARICQRVIERLRFTQNLPICDAILFSFDNRTLGSNRPVAAIVEDLRC.

The protein belongs to the CbiD family.

The catalysed reaction is Co-precorrin-5B + S-adenosyl-L-methionine = Co-precorrin-6A + S-adenosyl-L-homocysteine. It participates in cofactor biosynthesis; adenosylcobalamin biosynthesis; cob(II)yrinate a,c-diamide from sirohydrochlorin (anaerobic route): step 6/10. Its function is as follows. Catalyzes the methylation of C-1 in cobalt-precorrin-5B to form cobalt-precorrin-6A. This chain is Cobalt-precorrin-5B C(1)-methyltransferase, found in Edwardsiella ictaluri (strain 93-146).